The chain runs to 111 residues: MQRIKKGDKVVVITGKNKGGSGIVLKIMPARQQAIVEGLNKVTRHKKKDQTTKRAAKQSTGKVQQEAPIFLSKLALFDQKAKQQTIGKIKYVMDPKTNKKTRVFKKSNNTL.

The interval 43–62 (TRHKKKDQTTKRAAKQSTGK) is disordered.

This sequence belongs to the universal ribosomal protein uL24 family. In terms of assembly, part of the 50S ribosomal subunit.

In terms of biological role, one of two assembly initiator proteins, it binds directly to the 5'-end of the 23S rRNA, where it nucleates assembly of the 50S subunit. Functionally, one of the proteins that surrounds the polypeptide exit tunnel on the outside of the subunit. In Mycoplasma pneumoniae (strain ATCC 29342 / M129 / Subtype 1) (Mycoplasmoides pneumoniae), this protein is Large ribosomal subunit protein uL24.